We begin with the raw amino-acid sequence, 143 residues long: MKSYMAKPSDVERKWFVIDAEGKVLGRLASQIAKILMGKHKPTYTPHVDTGDFVVVINADKVVLTGKKLEDKYYKYYTGYPGGLKQIQYKKLMQTKPEFVIYHAVKGMLPKNRLGRRMIKRLKVYRGAEHKHQAQKPEKLDIE.

It belongs to the universal ribosomal protein uL13 family. In terms of assembly, part of the 50S ribosomal subunit.

This protein is one of the early assembly proteins of the 50S ribosomal subunit, although it is not seen to bind rRNA by itself. It is important during the early stages of 50S assembly. This Caldanaerobacter subterraneus subsp. tengcongensis (strain DSM 15242 / JCM 11007 / NBRC 100824 / MB4) (Thermoanaerobacter tengcongensis) protein is Large ribosomal subunit protein uL13.